The primary structure comprises 214 residues: tRNA (guanine-N(7)-)-methyltransferase (214 aa).

Residues E43, E68, D95, and D117 each coordinate S-adenosyl-L-methionine. Residue D117 is part of the active site. Substrate contacts are provided by residues K121, D153, and 191-194; that span reads TEYE.

It belongs to the class I-like SAM-binding methyltransferase superfamily. TrmB family.

It catalyses the reaction guanosine(46) in tRNA + S-adenosyl-L-methionine = N(7)-methylguanosine(46) in tRNA + S-adenosyl-L-homocysteine. It functions in the pathway tRNA modification; N(7)-methylguanine-tRNA biosynthesis. Its function is as follows. Catalyzes the formation of N(7)-methylguanine at position 46 (m7G46) in tRNA. This chain is tRNA (guanine-N(7)-)-methyltransferase, found in Lachnoclostridium phytofermentans (strain ATCC 700394 / DSM 18823 / ISDg) (Clostridium phytofermentans).